A 405-amino-acid polypeptide reads, in one-letter code: GTPase Obg (405 aa).

Residues Met-1 to Val-159 enclose the Obg domain. Positions Ala-160–Glu-333 constitute an OBG-type G domain. Residues Gly-166–Ser-173, Phe-191–Val-195, Asp-213–Gly-216, Asn-283–Asp-286, and Ala-314–Leu-316 contribute to the GTP site. Mg(2+) contacts are provided by Ser-173 and Thr-193. Residues Tyr-371 to Thr-382 show a composition bias toward basic and acidic residues. The disordered stretch occupies residues Tyr-371–Pro-405. Positions Asp-383–Val-399 are enriched in acidic residues.

It belongs to the TRAFAC class OBG-HflX-like GTPase superfamily. OBG GTPase family. Monomer. Requires Mg(2+) as cofactor.

The protein localises to the cytoplasm. Its function is as follows. An essential GTPase which binds GTP, GDP and possibly (p)ppGpp with moderate affinity, with high nucleotide exchange rates and a fairly low GTP hydrolysis rate. Plays a role in control of the cell cycle, stress response, ribosome biogenesis and in those bacteria that undergo differentiation, in morphogenesis control. In Psychrobacter arcticus (strain DSM 17307 / VKM B-2377 / 273-4), this protein is GTPase Obg.